The primary structure comprises 255 residues: Type III pantothenate kinase (255 aa).

6 to 13 (DIGNTNIK) serves as a coordination point for ATP. 107–110 (GADR) is a substrate binding site. Asp-109 acts as the Proton acceptor in catalysis. Thr-132 serves as a coordination point for ATP. Position 184 (Thr-184) interacts with substrate.

The protein belongs to the type III pantothenate kinase family. In terms of assembly, homodimer. NH4(+) is required as a cofactor. K(+) serves as cofactor.

The protein resides in the cytoplasm. It catalyses the reaction (R)-pantothenate + ATP = (R)-4'-phosphopantothenate + ADP + H(+). It participates in cofactor biosynthesis; coenzyme A biosynthesis; CoA from (R)-pantothenate: step 1/5. In terms of biological role, catalyzes the phosphorylation of pantothenate (Pan), the first step in CoA biosynthesis. This chain is Type III pantothenate kinase, found in Roseiflexus castenholzii (strain DSM 13941 / HLO8).